The following is a 582-amino-acid chain: Aspartate--tRNA(Asp/Asn) ligase (582 aa).

Glu177 provides a ligand contact to L-aspartate. Residues 201–204 (QLFK) are aspartate. Arg223 lines the L-aspartate pocket. ATP contacts are provided by residues 223–225 (RDE) and Gln232. L-aspartate is bound at residue His447. Residue Glu481 participates in ATP binding. Residue Arg488 participates in L-aspartate binding. 533–536 (GLDR) contributes to the ATP binding site.

This sequence belongs to the class-II aminoacyl-tRNA synthetase family. Type 1 subfamily. Homodimer.

The protein localises to the cytoplasm. The catalysed reaction is tRNA(Asx) + L-aspartate + ATP = L-aspartyl-tRNA(Asx) + AMP + diphosphate. Its function is as follows. Aspartyl-tRNA synthetase with relaxed tRNA specificity since it is able to aspartylate not only its cognate tRNA(Asp) but also tRNA(Asn). Reaction proceeds in two steps: L-aspartate is first activated by ATP to form Asp-AMP and then transferred to the acceptor end of tRNA(Asp/Asn). This chain is Aspartate--tRNA(Asp/Asn) ligase, found in Chlamydia trachomatis serovar A (strain ATCC VR-571B / DSM 19440 / HAR-13).